Here is a 207-residue protein sequence, read N- to C-terminus: MPKVALYNQNGSTAGDIELNASVFGIEPNESVVFDAILMQRASLRQGSHKVKNRSEVRGGGRKPWRQKGTGRARQGSIRSPQWRGGGVVFGPTPRSYSYKLPKKVRRLAIKSVLSSKVNDNNIIVLEDLTLDTVKTKEMAAILKGLSVEKKALIVTADANEAVSLSARNIPGVTVVQANGINVLDVVNHEKLLITKAAVEKVEEVLA.

Residues 48–89 (SHKVKNRSEVRGGGRKPWRQKGTGRARQGSIRSPQWRGGGVV) are disordered. Basic residues predominate over residues 60 to 71 (GGRKPWRQKGTG).

The protein belongs to the universal ribosomal protein uL4 family. In terms of assembly, part of the 50S ribosomal subunit.

In terms of biological role, one of the primary rRNA binding proteins, this protein initially binds near the 5'-end of the 23S rRNA. It is important during the early stages of 50S assembly. It makes multiple contacts with different domains of the 23S rRNA in the assembled 50S subunit and ribosome. Functionally, forms part of the polypeptide exit tunnel. The protein is Large ribosomal subunit protein uL4 of Bacillus velezensis (strain DSM 23117 / BGSC 10A6 / LMG 26770 / FZB42) (Bacillus amyloliquefaciens subsp. plantarum).